A 378-amino-acid polypeptide reads, in one-letter code: Uroporphyrinogen decarboxylase (378 aa).

Substrate is bound by residues 40–44, aspartate 90, tyrosine 167, serine 222, and histidine 355; that span reads RQAGR.

It belongs to the uroporphyrinogen decarboxylase family. Homodimer.

The protein resides in the cytoplasm. It catalyses the reaction uroporphyrinogen III + 4 H(+) = coproporphyrinogen III + 4 CO2. It functions in the pathway porphyrin-containing compound metabolism; protoporphyrin-IX biosynthesis; coproporphyrinogen-III from 5-aminolevulinate: step 4/4. In terms of biological role, catalyzes the decarboxylation of four acetate groups of uroporphyrinogen-III to yield coproporphyrinogen-III. This Psychrobacter arcticus (strain DSM 17307 / VKM B-2377 / 273-4) protein is Uroporphyrinogen decarboxylase.